A 243-amino-acid chain; its full sequence is CRISPR-associated endoribonuclease Cas6 (243 aa).

Belongs to the CRISPR-associated endoribonuclease Cas6 family. In terms of assembly, part of the Csm effector complex that includes at least Cas10(1), Csm2(3), Csm3(5), Csm4(1); the presence of Csm5 and Cas6 may depend on the processing state of precursor crRNA. Csm with a precursor crRNA does not include Csm5, while Cas6, the enzyme probably involved in pre-crRNA processing, is found associated with a subset of the Csm complex that is probably in the process of pre-crRNA maturation. The Csm complex is elongated and slightly twisted with a maximal length of 215 Angstroms and a diameter of 75-80 Angstroms. It has been modeled to have a central protein filamant of Csm3 subunits along which the dsRNA helix of paired crRNA and target RNA binds. The filament is capped at one end by Cas10 and Csm4 and at the other end by Csm5; ssDNA is thought to bind to the N-terminal HD domain of Cas10.

Its function is as follows. CRISPR (clustered regularly interspaced short palindromic repeat) is an adaptive immune system that provides protection against mobile genetic elements (viruses, transposable elements and conjugative plasmids). CRISPR clusters contain spacers, sequences complementary to antecedent mobile elements, and target invading nucleic acids. CRISPR clusters are transcribed and processed into CRISPR RNA (crRNA). The type III-A Csm effector complex binds crRNA and acts as a crRNA-guided RNase, DNase and cyclic oligoadenylate synthase; binding of target RNA cognate to the crRNA is required for all activities. In a heterologous host this Csm effector complex restricts ssRNA phage MS2, suggesting it may target RNA viruses in vivo. In terms of biological role, csm functions as a non-specific ssDNase. Base-pairing between crRNA and target RNA to form a ternary Csm complex activates a ssDNase activity; target RNA cleavage suppresses the ssDNase, a temporal control that prevents uncontrolled DNA degradation. Viral RNA transcripts probably tether the Csm complex to the viral genome, recruiting Cas10 ssDNA activity which is able to degrade DNA in the transcription bubble, spatially controlling the DNase activity. Functionally, this protein processes pre-crRNA into individual crRNA units. This chain is CRISPR-associated endoribonuclease Cas6, found in Streptococcus thermophilus.